A 178-amino-acid chain; its full sequence is Peptidyl-prolyl cis-trans isomerase (178 aa).

Residues 1–17 (MKLLFFFLVLAVSAAVA) form the signal peptide. The region spanning 26-177 (FMDIEIDGES…KIAKITDIGL (152 aa)) is the PPIase cyclophilin-type domain.

The protein belongs to the cyclophilin-type PPIase family. PPIase A subfamily.

The catalysed reaction is [protein]-peptidylproline (omega=180) = [protein]-peptidylproline (omega=0). Functionally, PPIases accelerate the folding of proteins. It catalyzes the cis-trans isomerization of proline imidic peptide bonds in oligopeptides. Up-regulates interferon gamma production by bovine T-cells. Stimulates high levels of IFN-gamma production by peripheral blood mononuclear cells and T-cells. The IFN-gamma-inducing effect is blocked by cyclosporin A (CsA). This is Peptidyl-prolyl cis-trans isomerase from Neospora caninum (Coccidian parasite).